Here is a 322-residue protein sequence, read N- to C-terminus: NADH-cytochrome b5 reductase 2 (322 aa).

Residues leucine 32–leucine 48 form a helical membrane-spanning segment. An FAD-binding FR-type domain is found at glutamine 72 to glutamate 176. Lysine 179–leucine 214 is an FAD binding site.

This sequence belongs to the flavoprotein pyridine nucleotide cytochrome reductase family. FAD is required as a cofactor.

It localises to the mitochondrion outer membrane. The enzyme catalyses 2 Fe(III)-[cytochrome b5] + NADH = 2 Fe(II)-[cytochrome b5] + NAD(+) + H(+). Its function is as follows. May mediate the reduction of outer membrane cytochrome b5. The protein is NADH-cytochrome b5 reductase 2 (mcr1) of Aspergillus clavatus (strain ATCC 1007 / CBS 513.65 / DSM 816 / NCTC 3887 / NRRL 1 / QM 1276 / 107).